Reading from the N-terminus, the 306-residue chain is 4-hydroxy-3-methylbut-2-enyl diphosphate reductase (306 aa).

Cysteine 12 is a binding site for [4Fe-4S] cluster. Positions 41 and 74 each coordinate (2E)-4-hydroxy-3-methylbut-2-enyl diphosphate. 2 residues coordinate dimethylallyl diphosphate: histidine 41 and histidine 74. Positions 41 and 74 each coordinate isopentenyl diphosphate. [4Fe-4S] cluster is bound at residue cysteine 96. Histidine 124 lines the (2E)-4-hydroxy-3-methylbut-2-enyl diphosphate pocket. Histidine 124 is a dimethylallyl diphosphate binding site. Histidine 124 is a binding site for isopentenyl diphosphate. Glutamate 126 (proton donor) is an active-site residue. Threonine 164 is a binding site for (2E)-4-hydroxy-3-methylbut-2-enyl diphosphate. Cysteine 194 contacts [4Fe-4S] cluster. Residues serine 222, serine 223, asparagine 224, and serine 266 each contribute to the (2E)-4-hydroxy-3-methylbut-2-enyl diphosphate site. 4 residues coordinate dimethylallyl diphosphate: serine 222, serine 223, asparagine 224, and serine 266. Isopentenyl diphosphate is bound by residues serine 222, serine 223, asparagine 224, and serine 266.

This sequence belongs to the IspH family. It depends on [4Fe-4S] cluster as a cofactor.

It catalyses the reaction isopentenyl diphosphate + 2 oxidized [2Fe-2S]-[ferredoxin] + H2O = (2E)-4-hydroxy-3-methylbut-2-enyl diphosphate + 2 reduced [2Fe-2S]-[ferredoxin] + 2 H(+). The enzyme catalyses dimethylallyl diphosphate + 2 oxidized [2Fe-2S]-[ferredoxin] + H2O = (2E)-4-hydroxy-3-methylbut-2-enyl diphosphate + 2 reduced [2Fe-2S]-[ferredoxin] + 2 H(+). Its pathway is isoprenoid biosynthesis; dimethylallyl diphosphate biosynthesis; dimethylallyl diphosphate from (2E)-4-hydroxy-3-methylbutenyl diphosphate: step 1/1. It functions in the pathway isoprenoid biosynthesis; isopentenyl diphosphate biosynthesis via DXP pathway; isopentenyl diphosphate from 1-deoxy-D-xylulose 5-phosphate: step 6/6. Catalyzes the conversion of 1-hydroxy-2-methyl-2-(E)-butenyl 4-diphosphate (HMBPP) into a mixture of isopentenyl diphosphate (IPP) and dimethylallyl diphosphate (DMAPP). Acts in the terminal step of the DOXP/MEP pathway for isoprenoid precursor biosynthesis. This is 4-hydroxy-3-methylbut-2-enyl diphosphate reductase from Dechloromonas aromatica (strain RCB).